The following is a 556-amino-acid chain: Arginine--tRNA ligase 1 (556 aa).

The 'HIGH' region motif lies at 132–142 (ANPTGDLHLGH).

It belongs to the class-I aminoacyl-tRNA synthetase family. In terms of assembly, monomer.

The protein resides in the cytoplasm. It carries out the reaction tRNA(Arg) + L-arginine + ATP = L-arginyl-tRNA(Arg) + AMP + diphosphate. In Bacillus anthracis, this protein is Arginine--tRNA ligase 1.